A 351-amino-acid polypeptide reads, in one-letter code: Dihydroorotate dehydrogenase (quinone) (351 aa).

Residues 67 to 71 and Thr91 contribute to the FMN site; that span reads AGFDK. Substrate is bound at residue Lys71. A substrate-binding site is contributed by 116-120; that stretch reads NAMGF. FMN-binding residues include Asn145 and Asn178. Asn178 contacts substrate. The Nucleophile role is filled by Ser181. Residue Asn183 participates in substrate binding. Positions 214 and 242 each coordinate FMN. Residue 243 to 244 participates in substrate binding; sequence NT. Residues Gly262, Gly291, and 312–313 each bind FMN; that span reads YS.

This sequence belongs to the dihydroorotate dehydrogenase family. Type 2 subfamily. In terms of assembly, monomer. It depends on FMN as a cofactor.

It localises to the cell membrane. It catalyses the reaction (S)-dihydroorotate + a quinone = orotate + a quinol. It functions in the pathway pyrimidine metabolism; UMP biosynthesis via de novo pathway; orotate from (S)-dihydroorotate (quinone route): step 1/1. Its function is as follows. Catalyzes the conversion of dihydroorotate to orotate with quinone as electron acceptor. The protein is Dihydroorotate dehydrogenase (quinone) of Helicobacter pylori (strain Shi470).